The sequence spans 367 residues: 4-hydroxy-3-methylbut-2-en-1-yl diphosphate synthase (flavodoxin) (367 aa).

Residues Cys268, Cys271, Cys303, and Glu310 each contribute to the [4Fe-4S] cluster site.

It belongs to the IspG family. [4Fe-4S] cluster serves as cofactor.

It catalyses the reaction (2E)-4-hydroxy-3-methylbut-2-enyl diphosphate + oxidized [flavodoxin] + H2O + 2 H(+) = 2-C-methyl-D-erythritol 2,4-cyclic diphosphate + reduced [flavodoxin]. It functions in the pathway isoprenoid biosynthesis; isopentenyl diphosphate biosynthesis via DXP pathway; isopentenyl diphosphate from 1-deoxy-D-xylulose 5-phosphate: step 5/6. In terms of biological role, converts 2C-methyl-D-erythritol 2,4-cyclodiphosphate (ME-2,4cPP) into 1-hydroxy-2-methyl-2-(E)-butenyl 4-diphosphate. This is 4-hydroxy-3-methylbut-2-en-1-yl diphosphate synthase (flavodoxin) from Shouchella clausii (strain KSM-K16) (Alkalihalobacillus clausii).